A 741-amino-acid chain; its full sequence is Catalase-peroxidase 2 (741 aa).

The signal sequence occupies residues 1-28 (MQKKRVGKSVVAALAIIAMSAGTVAAWA). The segment at residues 107–228 (WHGAGTYRTY…LAATQMGLIY (122 aa)) is a cross-link (tryptophyl-tyrosyl-methioninium (Trp-Tyr) (with M-254)). Histidine 108 functions as the Proton acceptor in the catalytic mechanism. Positions 228–254 (YVNPEGPNGNPDPVAAAKDIRDAFGRM) form a cross-link, tryptophyl-tyrosyl-methioninium (Tyr-Met) (with W-107). Residue histidine 269 participates in heme b binding.

Belongs to the peroxidase family. Peroxidase/catalase subfamily. Homodimer or homotetramer. Heme b serves as cofactor. Formation of the three residue Trp-Tyr-Met cross-link is important for the catalase, but not the peroxidase activity of the enzyme.

The enzyme catalyses H2O2 + AH2 = A + 2 H2O. The catalysed reaction is 2 H2O2 = O2 + 2 H2O. Functionally, bifunctional enzyme with both catalase and broad-spectrum peroxidase activity. The polypeptide is Catalase-peroxidase 2 (Burkholderia ambifaria (strain ATCC BAA-244 / DSM 16087 / CCUG 44356 / LMG 19182 / AMMD) (Burkholderia cepacia (strain AMMD))).